The chain runs to 117 residues: Replication initiation control protein YabA (117 aa).

Zn(2+)-binding residues include His87, Cys89, Cys103, and Cys106.

The protein belongs to the YabA family. As to quaternary structure, homotetramer. Interacts with both DnaA and DnaN, acting as a bridge between these two proteins. Requires Zn(2+) as cofactor.

It localises to the cytoplasm. The protein localises to the nucleoid. Its function is as follows. Involved in control of chromosome replication initiation. Inhibits the cooperative binding of DnaA to the oriC region, thus negatively regulating initiation of chromosome replication. Inhibits the ability of DnaA-ATP to form a helix on DNA; does not disassemble preformed DnaA-DNA helices. Decreases the residence time of DnaA on the chromosome at its binding sites (oriC, replication forks and promoter-binding sites). Tethers DnaA to the replication machinery via the DNA polymerase beta sliding clamp subunit (dnaN). Associates with oriC and other DnaA targets on the chromosome in a DnaA-dependent manner. The protein is Replication initiation control protein YabA of Latilactobacillus sakei subsp. sakei (strain 23K) (Lactobacillus sakei subsp. sakei).